The sequence spans 513 residues: ATP synthase subunit alpha (513 aa).

Residue 171–178 (GDRQIGKT) participates in ATP binding.

It belongs to the ATPase alpha/beta chains family. In terms of assembly, F-type ATPases have 2 components, CF(1) - the catalytic core - and CF(0) - the membrane proton channel. CF(1) has five subunits: alpha(3), beta(3), gamma(1), delta(1), epsilon(1). CF(0) has three main subunits: a(1), b(2) and c(9-12). The alpha and beta chains form an alternating ring which encloses part of the gamma chain. CF(1) is attached to CF(0) by a central stalk formed by the gamma and epsilon chains, while a peripheral stalk is formed by the delta and b chains.

Its subcellular location is the cell inner membrane. It catalyses the reaction ATP + H2O + 4 H(+)(in) = ADP + phosphate + 5 H(+)(out). Its function is as follows. Produces ATP from ADP in the presence of a proton gradient across the membrane. The alpha chain is a regulatory subunit. In Wolbachia sp. subsp. Drosophila simulans (strain wRi), this protein is ATP synthase subunit alpha.